Consider the following 143-residue polypeptide: Histone H2B (143 aa).

The disordered stretch occupies residues 1–52 (MAPKPASTAGKAPASTASKAPVKSDAAKTASKSKVSSGADGEKKKRKKTRKE). Lysine 11 carries the post-translational modification N6-acetyllysine; alternate. Lysine 11 participates in a covalent cross-link: Glycyl lysine isopeptide (Lys-Gly) (interchain with G-Cter in SUMO); alternate. Serine 15 carries the post-translational modification Phosphoserine. Residue lysine 19 is modified to N6-acetyllysine. Over residues 23–39 (KSDAAKTASKSKVSSGA) the composition is skewed to low complexity. Residue lysine 137 forms a Glycyl lysine isopeptide (Lys-Gly) (interchain with G-Cter in ubiquitin) linkage.

Belongs to the histone H2B family. The nucleosome is a histone octamer containing two molecules each of H2A, H2B, H3 and H4 assembled in one H3-H4 heterotetramer and two H2A-H2B heterodimers. The octamer wraps approximately 147 bp of DNA. Post-translationally, monoubiquitinated to form H2BK123ub1. H2BK123ub1 gives a specific tag for epigenetic transcriptional activation and is also prerequisite for H3K4me and H3K79me formation. H2BK123ub1 also modulates the formation of double-strand breaks during meiosis and is a prerequisite for DNA-damage checkpoint activation. In terms of processing, phosphorylated to form H2BS10ph during progression through meiotic prophase. May be correlated with chromosome condensation. Acetylation of N-terminal lysines and particularly formation of H2BK11ac has a positive effect on transcription. Post-translationally, sumoylation to form H2BK6su occurs preferentially near the telomeres and represses gene transcription.

The protein localises to the nucleus. The protein resides in the chromosome. Functionally, core component of nucleosome. Nucleosomes wrap and compact DNA into chromatin, limiting DNA accessibility to the cellular machineries which require DNA as a template. Histones thereby play a central role in transcription regulation, DNA repair, DNA replication and chromosomal stability. DNA accessibility is regulated via a complex set of post-translational modifications of histones, also called histone code, and nucleosome remodeling. This Agaricus bisporus (White button mushroom) protein is Histone H2B (htbA).